The primary structure comprises 38 residues: Photosystem II reaction center protein X (38 aa).

The chain crosses the membrane as a helical span at residues 9 to 29; that stretch reads IASLTAGALVLSAIGIALIII.

It belongs to the PsbX family. Type 1 subfamily. PSII is composed of 1 copy each of membrane proteins PsbA, PsbB, PsbC, PsbD, PsbE, PsbF, PsbH, PsbI, PsbJ, PsbK, PsbL, PsbM, PsbT, PsbX, PsbY, PsbZ, Psb30/Ycf12, at least 3 peripheral proteins of the oxygen-evolving complex and a large number of cofactors. It forms dimeric complexes.

It localises to the plastid. It is found in the chloroplast thylakoid membrane. In terms of biological role, involved in the binding and/or turnover of quinones at the Q(B) site of photosystem II (PSII). PSII is a light-driven water plastoquinone oxidoreductase, using light energy to abstract electrons from H(2)O, generating a proton gradient subsequently used for ATP formation. The sequence is that of Photosystem II reaction center protein X from Thalassiosira pseudonana (Marine diatom).